Here is a 699-residue protein sequence, read N- to C-terminus: Elongation factor G (699 aa).

The tr-type G domain occupies 8-283 (EQIRNIGICA…AIVDFLPSPI (276 aa)). Residues 17–24 (AHIDAGKT), 81–85 (DTPGH), and 135–138 (NKMD) each bind GTP.

It belongs to the TRAFAC class translation factor GTPase superfamily. Classic translation factor GTPase family. EF-G/EF-2 subfamily.

It is found in the cytoplasm. In terms of biological role, catalyzes the GTP-dependent ribosomal translocation step during translation elongation. During this step, the ribosome changes from the pre-translocational (PRE) to the post-translocational (POST) state as the newly formed A-site-bound peptidyl-tRNA and P-site-bound deacylated tRNA move to the P and E sites, respectively. Catalyzes the coordinated movement of the two tRNA molecules, the mRNA and conformational changes in the ribosome. The polypeptide is Elongation factor G (fusA) (Rickettsia prowazekii (strain Madrid E)).